A 1029-amino-acid polypeptide reads, in one-letter code: Eukaryotic translation initiation factor 3 subunit A (1029 aa).

Residues 92–121 (LKKFIELAEQKVTEAQAKADEIQSSLESAA) are a coiled coil. One can recognise a PCI domain in the interval 339 to 523 (MTKAASFVLL…GVLTFESDIF (185 aa)). The stretch at 606–903 (TRRAIIEKRK…EEEAEQRRAA (298 aa)) forms a coiled coil. Basic and acidic residues-rich tracts occupy residues 621 to 632 (ALQKKQREEENR), 644 to 666 (EQQRLLDEHRERERKRMKDEQDR), 797 to 901 (TEKR…EQRR), and 913 to 924 (GPAREASPERTA). Disordered regions lie at residues 621 to 666 (ALQK…EQDR) and 797 to 1029 (TEKR…KQQQ). Residues 943–960 (AKAAASAGEQPAAAQEAT) show a composition bias toward low complexity. The segment covering 977–993 (ATRDGPSDSRDLSHARE) has biased composition (basic and acidic residues).

It belongs to the eIF-3 subunit A family. Component of the eukaryotic translation initiation factor 3 (eIF-3) complex.

The protein localises to the cytoplasm. Its function is as follows. RNA-binding component of the eukaryotic translation initiation factor 3 (eIF-3) complex, which is involved in protein synthesis of a specialized repertoire of mRNAs and, together with other initiation factors, stimulates binding of mRNA and methionyl-tRNAi to the 40S ribosome. The eIF-3 complex specifically targets and initiates translation of a subset of mRNAs involved in cell proliferation. The chain is Eukaryotic translation initiation factor 3 subunit A from Coccidioides immitis (strain RS) (Valley fever fungus).